A 275-amino-acid chain; its full sequence is Bis(5'-nucleosyl)-tetraphosphatase, symmetrical (275 aa).

The protein belongs to the Ap4A hydrolase family.

It catalyses the reaction P(1),P(4)-bis(5'-adenosyl) tetraphosphate + H2O = 2 ADP + 2 H(+). Its function is as follows. Hydrolyzes diadenosine 5',5'''-P1,P4-tetraphosphate to yield ADP. In Nitrosospira multiformis (strain ATCC 25196 / NCIMB 11849 / C 71), this protein is Bis(5'-nucleosyl)-tetraphosphatase, symmetrical.